We begin with the raw amino-acid sequence, 646 residues long: FAD-binding monooxygenase prhK (646 aa).

Asn46 carries an N-linked (GlcNAc...) asparagine glycan. The helical transmembrane segment at 80-97 threads the bilayer; that stretch reads IIIIGAGFGGLLFAVRLI. FAD-binding positions include 119-122, 131-132, and Tyr137; these read TWYW and DT. 129–131 is a binding site for NADP(+); sequence MCD. Residues 275-281 and 298-299 contribute to the NADP(+) site; these read TGATAIQ and RT. N-linked (GlcNAc...) asparagine glycosylation is found at Asn429, Asn483, and Asn529.

It belongs to the FAD-binding monooxygenase family. It depends on FAD as a cofactor.

Its subcellular location is the membrane. The catalysed reaction is preaustinoid A + AH2 + O2 = preaustinoid A1 + A + H2O. It functions in the pathway secondary metabolite biosynthesis; terpenoid biosynthesis. Functionally, FAD-binding monooxygenase; part of the gene cluster that mediates the biosynthesis of paraherquonin, a meroterpenoid with a unique, highly congested hexacyclic molecular architecture. The first step of the pathway is the synthesis of 3,5-dimethylorsellinic acid (DMOA) by the polyketide synthase prhL. Synthesis of DMOA is followed by farnesylation by the prenyltransferase prhE, methylesterification by the methyl-transferase prhM, epoxidation of the prenyl chain by the flavin-dependent monooxygenase prhF, and cyclization of the farnesyl moiety by the terpene cyclase prhH, to yield the tetracyclic intermediate, protoaustinoid A. The short chain dehydrogenase prhI then oxidizes the C-3 alcohol group of the terpene cyclase product to transform protoaustinoid A into protoaustinoid B. The FAD-binding monooxygenase prhJ catalyzes the oxidation of protoaustinoid B into preaustinoid A which is further oxidized into preaustinoid A1 by FAD-binding monooxygenase phrK. Finally, prhA leads to berkeleydione via the berkeleyone B intermediate. PrhA is a multifunctional dioxygenase that first desaturates at C5-C6 to form berkeleyone B, followed by rearrangement of the A/B-ring to form the cycloheptadiene moiety in berkeleydione. Berkeleydione serves as the key intermediate for the biosynthesis of paraherquonin as well as many other meroterpenoids. The cytochrome P450 monooxygenases prhB, prhD, and prhN, as well as the isomerase prhC, are probably involved in the late stage of paraherquonin biosynthesis, after the production of berkeleydione. Especially prhC might be a multifunctional enzyme that catalyzes the D-ring expansion via intramolecular methoxy rearrangement, as well as the hydrolysis of the expanded D-ring. The chain is FAD-binding monooxygenase prhK from Penicillium brasilianum.